A 336-amino-acid polypeptide reads, in one-letter code: Ornithine carbamoyltransferase, catabolic (336 aa).

Carbamoyl phosphate is bound by residues 57-60, Q84, R108, and 135-138; these read STRT and HPTQ. Residues N168, D232, and 236 to 237 each bind L-ornithine; that span reads SM. Residues 274 to 275 and R321 each bind carbamoyl phosphate; that span reads CL.

The protein belongs to the aspartate/ornithine carbamoyltransferase superfamily. OTCase family.

The protein resides in the cytoplasm. The catalysed reaction is carbamoyl phosphate + L-ornithine = L-citrulline + phosphate + H(+). The protein operates within amino-acid degradation; L-arginine degradation via ADI pathway; carbamoyl phosphate from L-arginine: step 2/2. Its function is as follows. Reversibly catalyzes the transfer of the carbamoyl group from carbamoyl phosphate (CP) to the N(epsilon) atom of ornithine (ORN) to produce L-citrulline. This is Ornithine carbamoyltransferase, catabolic (arcB) from Pseudomonas putida (strain ATCC 47054 / DSM 6125 / CFBP 8728 / NCIMB 11950 / KT2440).